A 144-amino-acid chain; its full sequence is Small ribosomal subunit protein bS6 (144 aa).

The segment at 95 to 144 (ELEEGPSAMMQSKSRDDRPRRGEGDDRPRRDDREDRPRRDREPRRMEGGE) is disordered. Positions 107 to 144 (KSRDDRPRRGEGDDRPRRDDREDRPRRDREPRRMEGGE) are enriched in basic and acidic residues.

Belongs to the bacterial ribosomal protein bS6 family.

Functionally, binds together with bS18 to 16S ribosomal RNA. This chain is Small ribosomal subunit protein bS6, found in Paramagnetospirillum magneticum (strain ATCC 700264 / AMB-1) (Magnetospirillum magneticum).